The primary structure comprises 31 residues: Photosystem I reaction center subunit XII (31 aa).

A helical membrane pass occupies residues 7 to 26; the sequence is QISIILLIALIPAFFSLKLG.

Belongs to the PsaM family.

The protein resides in the plastid. Its subcellular location is the chloroplast thylakoid membrane. This chain is Photosystem I reaction center subunit XII, found in Euglena myxocylindracea.